Consider the following 726-residue polypeptide: Catalase-peroxidase (726 aa).

The tryptophyl-tyrosyl-methioninium (Trp-Tyr) (with M-234) cross-link spans 85 to 208; it reads WHSAGSYRIH…FAATEMGLIY (124 aa). His-86 acts as the Proton acceptor in catalysis. A cross-link (tryptophyl-tyrosyl-methioninium (Tyr-Met) (with W-85)) is located at residues 208-234; that stretch reads YVNPEGPMGNPDPSGSAKEIRLAFTRM. Heme b is bound at residue His-249.

Belongs to the peroxidase family. Peroxidase/catalase subfamily. In terms of assembly, homodimer or homotetramer. Heme b is required as a cofactor. Post-translationally, formation of the three residue Trp-Tyr-Met cross-link is important for the catalase, but not the peroxidase activity of the enzyme.

It carries out the reaction H2O2 + AH2 = A + 2 H2O. The catalysed reaction is 2 H2O2 = O2 + 2 H2O. Its function is as follows. Bifunctional enzyme with both catalase and broad-spectrum peroxidase activity. The polypeptide is Catalase-peroxidase (Pseudothermotoga lettingae (strain ATCC BAA-301 / DSM 14385 / NBRC 107922 / TMO) (Thermotoga lettingae)).